The chain runs to 317 residues: Carbamate kinase (317 aa).

It belongs to the carbamate kinase family. Homodimer.

It carries out the reaction hydrogencarbonate + NH4(+) + ATP = carbamoyl phosphate + ADP + H2O + H(+). It participates in metabolic intermediate metabolism; carbamoyl phosphate degradation; CO(2) and NH(3) from carbamoyl phosphate: step 1/1. The protein is Carbamate kinase (CBK) of Giardia intestinalis (Giardia lamblia).